The sequence spans 364 residues: Trans-enoyl reductase traG (364 aa).

51–54 (VDAK) is an NADP(+) binding site. Position 136–143 (136–143 (LGLFTAGL)) interacts with substrate. NADP(+) contacts are provided by residues 176-179 (STAT), 199-202 (SKAN), Tyr-217, and 264-265 (LE). Position 286–290 (286–290 (ALTVF)) interacts with substrate. 355 to 356 (MS) is an NADP(+) binding site.

It belongs to the zinc-containing alcohol dehydrogenase family. In terms of assembly, monomer.

The protein operates within secondary metabolite biosynthesis. Trans-enoyl reductase; part of the tra gene cluster that produces terrestric acid. The clavatol biosynthesis cluster cla and the terrestric acid cluster tra are both involved in the production of peniphenones and penilactones. The non-reducing PKS claF is responsible for the formation of clavatol from successive condensations of 3 malonyl-CoA units, presumably with a simple acetyl-CoA starter unit, and 2 methylation steps. The esterase claE probably collaborates with claF by catalyzing the hydrolysis of ACP-bound acyl intermediates to free the ACP from stalled intermediates. The clavatol oxidase claD then converts clavatol to hydroxyclavatol. Spontaneous dehydration of hydroxyclavatol leads to the accumulation of the highly active ortho-quinone methide. On the other hand, the PKS-NRPS hybrid traA is involved in the formation of crustosic acid, with the help of traB and traD. The polyketide synthase module (PKS) of traA is responsible for the synthesis of the polyketide backbone via the condensation of an acetyl-CoA starter unit with 3 malonyl-CoA units. The downstream nonribosomal peptide synthetase (NRPS) module then amidates the carboxyl end of the polyketide with L-malic acid. Because traA lacks a designated enoylreductase (ER) domain, the required activity is provided the enoyl reductase traG. Crustosic acid undergoes decarboxylation and isomerization to the terrestric acid, catalyzed by the 2-oxoglutarate-dependent dioxygenase traH. Both acids are further converted to the 2 gamma-butyrolactones (R)-5-methyltetronic acid and (S)-5-carboxylmethyltetronic acid, with involvement of the cytochrome P450 monooxygenase claJ. Spontaneous addition of the methide to these gamma-butyrolactones leads to peniphenone D and penilactone D, which undergo again stereospecific attacking by methide to give penilactones A and B. The polypeptide is Trans-enoyl reductase traG (Penicillium crustosum (Blue mold fungus)).